The sequence spans 211 residues: Phosphoglycerate mutase (211 aa).

Residues Arg14 to Asn21 and Thr27 to Gly28 each bind substrate. The active-site Tele-phosphohistidine intermediate is the His15. Phosphothreonine is present on Thr37. Ser62 carries the post-translational modification Phosphoserine. Substrate contacts are provided by residues Arg66, Glu93–Tyr96, Lys104, Arg120–Arg121, and Gly164–Asn165. Glu93 serves as the catalytic Proton donor/acceptor. Phosphotyrosine is present on Tyr96. At Ser166 the chain carries Phosphoserine.

The protein belongs to the phosphoglycerate mutase family. BPG-dependent PGAM subfamily. As to quaternary structure, monomer. The N-terminus is blocked.

It catalyses the reaction (2R)-2-phosphoglycerate = (2R)-3-phosphoglycerate. The protein operates within carbohydrate degradation; glycolysis; pyruvate from D-glyceraldehyde 3-phosphate: step 3/5. This Schizosaccharomyces pombe (strain 972 / ATCC 24843) (Fission yeast) protein is Phosphoglycerate mutase (gpm1).